The primary structure comprises 694 residues: Type VI secretion system spike protein VgrG2 (694 aa).

Belongs to the VgrG protein family.

The protein resides in the secreted. Functionally, part of the type VI secretion system specialized secretion system, which delivers several virulence factors in both prokaryotic and eukaryotic cells during infection. Forms the spike at the tip of the elongating tube formed by haemolysin co-regulated protein Hcp. Allows the delivery of the VasX antibacterial toxin to target cells where it exerts its toxicity. This chain is Type VI secretion system spike protein VgrG2 (vgrG2), found in Vibrio cholerae serotype O1 (strain ATCC 39315 / El Tor Inaba N16961).